The primary structure comprises 487 residues: GTPase Der (487 aa).

EngA-type G domains follow at residues 2–164 and 203–374; these read KTIA…SLAK and IAVG…QRFA. GTP-binding positions include 8-15, 55-59, 116-119, 209-216, 256-260, and 320-323; these read GKPNVGKS, DTGGI, NKVD, GRVNVGKS, DTAGI, and NKWD. Positions 375–459 constitute a KH-like domain; sequence YRIPTSALND…PILLSVKGKN (85 aa). Basic and acidic residues predominate over residues 459–480; sequence NAKDEENTSAKKESPSKVSHRE. The segment at 459–487 is disordered; sequence NAKDEENTSAKKESPSKVSHRESKNRRFV.

It belongs to the TRAFAC class TrmE-Era-EngA-EngB-Septin-like GTPase superfamily. EngA (Der) GTPase family. In terms of assembly, associates with the 50S ribosomal subunit.

Its function is as follows. GTPase that plays an essential role in the late steps of ribosome biogenesis. The sequence is that of GTPase Der from Helicobacter hepaticus (strain ATCC 51449 / 3B1).